The primary structure comprises 463 residues: MFS-type transporter criB (463 aa).

The next 11 membrane-spanning stretches (helical) occupy residues 5–27, 46–66, 83–103, 106–126, 141–161, 168–188, 256–276, 293–313, 323–343, 355–375, and 402–422; these read LVLS…SGIM, MVGT…LTAG, VFVV…MLLI, LVTG…QAEI, LMLA…SFVN, MPLA…YFLP, LFLG…VINY, IFLS…ALFF, LMMA…LTAA, VAMI…LSWV, and FYFL…FLYP.

It belongs to the major facilitator superfamily. Sugar transporter (TC 2.A.1.1) family.

It is found in the membrane. Its function is as follows. MFS-type transporter; part of the gene cluster that mediates the biosynthesis of echinulin family alkaloid. The protein is MFS-type transporter criB of Aspergillus cristatus (Chinese Fuzhuan brick tea-fermentation fungus).